Reading from the N-terminus, the 147-residue chain is Transthyretin (147 aa).

A signal peptide spans 1 to 20 (MASHRLLLLCLAGLVFVSEA). Residue Cys-30 is modified to Sulfocysteine. Lys-35 serves as a coordination point for L-thyroxine. Position 62 is a 4-carboxyglutamate (Glu-62). Position 72 is a phosphoserine (Ser-72). Glu-74 contributes to the L-thyroxine binding site. The N-linked (GlcNAc...) asparagine glycan is linked to Asn-118. Ser-137 lines the L-thyroxine pocket.

It belongs to the transthyretin family. In terms of assembly, homotetramer. Dimer of dimers. In the homotetramer, subunits assemble around a central channel that can accommodate two ligand molecules. Interacts with RBP4. Post-translationally, sulfonation of the reactive cysteine Cys-30 enhances the stability of the native conformation of TTR, avoiding misassembly of the protein leading to amyloid formation. In terms of tissue distribution, detected in liver.

The protein resides in the secreted. In terms of biological role, thyroid hormone-binding protein. Probably transports thyroxine from the bloodstream to the brain. This is Transthyretin (TTR) from Pongo abelii (Sumatran orangutan).